Reading from the N-terminus, the 165-residue chain is SsrA-binding protein (165 aa).

The span at 1–10 (MSKKGKKKSK) shows a compositional bias: basic residues. The tract at residues 1-21 (MSKKGKKKSKNNSSVDGNRRL) is disordered.

This sequence belongs to the SmpB family.

The protein resides in the cytoplasm. In terms of biological role, required for rescue of stalled ribosomes mediated by trans-translation. Binds to transfer-messenger RNA (tmRNA), required for stable association of tmRNA with ribosomes. tmRNA and SmpB together mimic tRNA shape, replacing the anticodon stem-loop with SmpB. tmRNA is encoded by the ssrA gene; the 2 termini fold to resemble tRNA(Ala) and it encodes a 'tag peptide', a short internal open reading frame. During trans-translation Ala-aminoacylated tmRNA acts like a tRNA, entering the A-site of stalled ribosomes, displacing the stalled mRNA. The ribosome then switches to translate the ORF on the tmRNA; the nascent peptide is terminated with the 'tag peptide' encoded by the tmRNA and targeted for degradation. The ribosome is freed to recommence translation, which seems to be the essential function of trans-translation. The polypeptide is SsrA-binding protein (Prochlorococcus marinus (strain NATL1A)).